The primary structure comprises 254 residues: Isoprenyl transferase (254 aa).

The active site involves aspartate 12. Aspartate 12 provides a ligand contact to Mg(2+). Substrate contacts are provided by residues 13-16, tryptophan 17, arginine 25, histidine 29, and 57-59; these read GNGR and SSE. Asparagine 60 functions as the Proton acceptor in the catalytic mechanism. Residues tryptophan 61, arginine 63, arginine 180, and 186–188 contribute to the substrate site; that span reads RLS. Glutamate 199 is a Mg(2+) binding site.

It belongs to the UPP synthase family. In terms of assembly, homodimer. It depends on Mg(2+) as a cofactor.

In terms of biological role, catalyzes the condensation of isopentenyl diphosphate (IPP) with allylic pyrophosphates generating different type of terpenoids. The protein is Isoprenyl transferase of Brucella suis biovar 1 (strain 1330).